We begin with the raw amino-acid sequence, 363 residues long: ADP-ribosylhydrolase ARH3 (363 aa).

Glu41 lines the Mg(2+) pocket. Position 64 is a phosphothreonine (Thr64). Residues Thr76, Asp77, and Asp78 each contribute to the Mg(2+) site. Asp77 serves as a coordination point for substrate. Substrate-binding positions include Lys146–Gly152, His182, Leu235, and Ile271. Residues Asp314, Asp316, and Thr317 each coordinate Mg(2+).

It belongs to the ADP-ribosylglycohydrolase family. As to quaternary structure, monomer. Mg(2+) serves as cofactor. As to expression, ubiquitous. Expressed in skin fibroblasts.

It localises to the nucleus. It is found in the cytoplasm. The protein resides in the chromosome. The protein localises to the mitochondrion matrix. The catalysed reaction is [(1''-&gt;2')-ADP-alpha-D-ribose](n) + H2O = [(1''-&gt;2')-ADP-alpha-D-ribose](n-1) + ADP-D-ribose. It catalyses the reaction 1''-O-acetyl-ADP-alpha-D-ribose + H2O = ADP-D-ribose + acetate + H(+). It carries out the reaction O-(ADP-D-ribosyl)-L-seryl-[protein] + H2O = ADP-D-ribose + L-seryl-[protein]. The enzyme catalyses alpha-NAD(+) + H2O = ADP-D-ribose + nicotinamide + H(+). The protein undergoes a dramatic conformational switch from closed to open states upon substrate-binding, which enables specific substrate recognition for the 1''-O-linkage. The glutamate flap (Glu-41) blocks substrate entrance to Mg(2+) in the unliganded closed state. In presence of substrate, Glu-41 is ejected from the active site: this closed-to-open transition significantly widens the substrate-binding channel and precisely positions the scissile 1''-O-linkage for cleavage while securing tightly 2'- and 3'-hydroxyls of ADP-ribose. Functionally, ADP-ribosylhydrolase that preferentially hydrolyzes the scissile alpha-O-linkage attached to the anomeric C1'' position of ADP-ribose and acts on different substrates, such as proteins ADP-ribosylated on serine and threonine, free poly(ADP-ribose) and O-acetyl-ADP-D-ribose. Specifically acts as a serine mono-ADP-ribosylhydrolase by mediating the removal of mono-ADP-ribose attached to serine residues on proteins, thereby playing a key role in DNA damage response. Serine ADP-ribosylation of proteins constitutes the primary form of ADP-ribosylation of proteins in response to DNA damage. Does not hydrolyze ADP-ribosyl-arginine, -cysteine, -diphthamide, or -asparagine bonds. Also able to degrade protein free poly(ADP-ribose), which is synthesized in response to DNA damage: free poly(ADP-ribose) acts as a potent cell death signal and its degradation by ADPRHL2 protects cells from poly(ADP-ribose)-dependent cell death, a process named parthanatos. Also hydrolyzes free poly(ADP-ribose) in mitochondria. Specifically digests O-acetyl-ADP-D-ribose, a product of deacetylation reactions catalyzed by sirtuins. Specifically degrades 1''-O-acetyl-ADP-D-ribose isomer, rather than 2''-O-acetyl-ADP-D-ribose or 3''-O-acetyl-ADP-D-ribose isomers. In Homo sapiens (Human), this protein is ADP-ribosylhydrolase ARH3.